The primary structure comprises 517 residues: Ladinin-1 (517 aa).

Residues 1–401 form a disordered region; the sequence is MAVSRKDWSA…SASMKLPDNT (401 aa). The residue at position 38 (serine 38) is a Phosphoserine. Positions 48 to 58 are enriched in polar residues; that stretch reads LSQNGDRQASA. Residues serine 64, serine 78, serine 121, and serine 123 each carry the phosphoserine modification. The span at 120-131 shows a compositional bias: polar residues; the sequence is NSLSPVQATQKP. 2 stretches are compositionally biased toward basic and acidic residues: residues 134 to 151 and 161 to 174; these read SKKE…REQR and LVGR…KGVP. 8 SEK repeats span residues 203 to 205, 209 to 211, 215 to 217, 221 to 223, 227 to 229, 239 to 241, 257 to 259, and 269 to 271; these read SEK. Residues 203–271 are 8 X SEK repeats; the sequence is SEKVLASEKT…IFEKALASEK (69 aa). Over residues 219-233 the composition is skewed to basic and acidic residues; it reads AVSEKRNSSEKKSVL. Phosphoserine is present on residues serine 347, serine 356, and serine 394. Residues 355-373 are compositionally biased toward polar residues; sequence SSPTQRTYSSSLKRSSPRT. Residue arginine 424 is modified to Omega-N-methylarginine. The tract at residues 481 to 517 is disordered; the sequence is RTQESGDQDPQEAQKASSATERTQWGQKSDSSLDAEV. Serine 485 is modified (phosphoserine). Residues 494-517 show a composition bias toward polar residues; the sequence is QKASSATERTQWGQKSDSSLDAEV.

It is found in the secreted. It localises to the extracellular space. The protein resides in the extracellular matrix. Its subcellular location is the basement membrane. In terms of biological role, anchoring filament protein which is a component of the basement membrane zone. The protein is Ladinin-1 (LAD1) of Homo sapiens (Human).